Reading from the N-terminus, the 477-residue chain is Tyrosine-protein kinase transforming protein Fes (477 aa).

Positions 49–76 are disordered; the sequence is GEPPPVLLLQDDRHSTSSSEQEREGGRT. The segment covering 58–74 has biased composition (basic and acidic residues); sequence QDDRHSTSSSEQEREGG. Positions 115–204 constitute an SH2 domain; that stretch reads WYHGALPRAE…KSGIVLNRAV (90 aa). A Protein kinase domain is found at 216–477; sequence LVLGEQIGRG…ELQSIRKRHR (262 aa). ATP contacts are provided by residues 222–230 and Lys245; that span reads IGRGNFGEV. The Proton acceptor role is filled by Asp338. Tyr368 carries the post-translational modification Phosphotyrosine; by autocatalysis.

This sequence belongs to the protein kinase superfamily. Tyr protein kinase family. Fes/fps subfamily.

The catalysed reaction is L-tyrosyl-[protein] + ATP = O-phospho-L-tyrosyl-[protein] + ADP + H(+). The chain is Tyrosine-protein kinase transforming protein Fes (V-FES) from Feline sarcoma virus (strain Snyder-Theilen).